Consider the following 493-residue polypeptide: Proline--tRNA ligase (493 aa).

It belongs to the class-II aminoacyl-tRNA synthetase family. ProS type 3 subfamily. In terms of assembly, homodimer.

It is found in the cytoplasm. The catalysed reaction is tRNA(Pro) + L-proline + ATP = L-prolyl-tRNA(Pro) + AMP + diphosphate. In terms of biological role, catalyzes the attachment of proline to tRNA(Pro) in a two-step reaction: proline is first activated by ATP to form Pro-AMP and then transferred to the acceptor end of tRNA(Pro). The chain is Proline--tRNA ligase from Azobacteroides pseudotrichonymphae genomovar. CFP2.